The primary structure comprises 510 residues: ATP synthase subunit alpha (510 aa).

169 to 176 provides a ligand contact to ATP; sequence GDRQTGKT.

The protein belongs to the ATPase alpha/beta chains family. As to quaternary structure, F-type ATPases have 2 components, CF(1) - the catalytic core - and CF(0) - the membrane proton channel. CF(1) has five subunits: alpha(3), beta(3), gamma(1), delta(1), epsilon(1). CF(0) has three main subunits: a(1), b(2) and c(9-12). The alpha and beta chains form an alternating ring which encloses part of the gamma chain. CF(1) is attached to CF(0) by a central stalk formed by the gamma and epsilon chains, while a peripheral stalk is formed by the delta and b chains.

It localises to the cell inner membrane. It carries out the reaction ATP + H2O + 4 H(+)(in) = ADP + phosphate + 5 H(+)(out). In terms of biological role, produces ATP from ADP in the presence of a proton gradient across the membrane. The alpha chain is a regulatory subunit. The protein is ATP synthase subunit alpha of Rickettsia rickettsii (strain Iowa).